Consider the following 391-residue polypeptide: Ferrochelatase (391 aa).

Fe cation contacts are provided by His196 and Glu281.

This sequence belongs to the ferrochelatase family.

It localises to the cytoplasm. The enzyme catalyses heme b + 2 H(+) = protoporphyrin IX + Fe(2+). The protein operates within porphyrin-containing compound metabolism; protoheme biosynthesis; protoheme from protoporphyrin-IX: step 1/1. In terms of biological role, catalyzes the ferrous insertion into protoporphyrin IX. This is Ferrochelatase from Prochlorococcus marinus (strain MIT 9215).